The primary structure comprises 215 residues: Probable transaldolase (215 aa).

Residue Lys83 is the Schiff-base intermediate with substrate of the active site.

Belongs to the transaldolase family. Type 3B subfamily.

It is found in the cytoplasm. The catalysed reaction is D-sedoheptulose 7-phosphate + D-glyceraldehyde 3-phosphate = D-erythrose 4-phosphate + beta-D-fructose 6-phosphate. It participates in carbohydrate degradation; pentose phosphate pathway; D-glyceraldehyde 3-phosphate and beta-D-fructose 6-phosphate from D-ribose 5-phosphate and D-xylulose 5-phosphate (non-oxidative stage): step 2/3. Its function is as follows. Transaldolase is important for the balance of metabolites in the pentose-phosphate pathway. This chain is Probable transaldolase, found in Desulforudis audaxviator (strain MP104C).